A 551-amino-acid polypeptide reads, in one-letter code: Probable malate:quinone oxidoreductase (551 aa).

A compositionally biased stretch (low complexity) spans 525–544 (QTAAAAPQAQPQLKPQPDAK). Positions 525-551 (QTAAAAPQAQPQLKPQPDAKPVADIAL) are disordered.

Belongs to the MQO family. FAD is required as a cofactor.

It carries out the reaction (S)-malate + a quinone = a quinol + oxaloacetate. It participates in carbohydrate metabolism; tricarboxylic acid cycle; oxaloacetate from (S)-malate (quinone route): step 1/1. In Enterobacter sp. (strain 638), this protein is Probable malate:quinone oxidoreductase.